The sequence spans 193 residues: Naphthalene 1,2-dioxygenase system, small oxygenase component (193 aa).

Belongs to the bacterial ring-hydroxylating dioxygenase beta subunit family. The naphthalene dioxygenase (NDO) multicomponent enzyme system is composed of an electron transfer component and a dioxygenase component (iron sulfur protein (ISP)). The electron transfer component is composed of a ferredoxin reductase (NdoR) and a ferredoxin (NdoA), and the dioxygenase component is formed of a heterohexamer (trimer of heterodimers) of three large alpha subunits (NdoB) and three small beta subunits (NdoC).

It participates in aromatic compound metabolism; naphthalene degradation. In terms of biological role, component of the naphthalene dioxygenase (NDO) multicomponent enzyme system which catalyzes the incorporation of both atoms of molecular oxygen into naphthalene to form cis-(1R,2S)-dihydroxy-1,2-dihydronaphthalene. The beta subunit seems to have a structural role in the holoenzyme. This Pseudomonas aeruginosa protein is Naphthalene 1,2-dioxygenase system, small oxygenase component.